The chain runs to 128 residues: Glycine cleavage system H protein (128 aa).

The Lipoyl-binding domain maps to 24-106; it reads VYSVGITEHA…YTDGWLFSIK (83 aa). K65 is subject to N6-lipoyllysine.

It belongs to the GcvH family. In terms of assembly, the glycine cleavage system is composed of four proteins: P, T, L and H. (R)-lipoate serves as cofactor.

The glycine cleavage system catalyzes the degradation of glycine. The H protein shuttles the methylamine group of glycine from the P protein to the T protein. The polypeptide is Glycine cleavage system H protein (Yersinia pseudotuberculosis serotype O:1b (strain IP 31758)).